The chain runs to 142 residues: Large ribosomal subunit protein uL11 (142 aa).

In terms of assembly, part of the ribosomal stalk of the 50S ribosomal subunit. Interacts with L10 and the large rRNA to form the base of the stalk. L10 forms an elongated spine to which L12 dimers bind in a sequential fashion forming a multimeric L10(L12)X complex. Lys-40 is trimethylated or acetylated; other modifications may also exist.

Forms part of the ribosomal stalk which helps the ribosome interact with GTP-bound translation factors. The polypeptide is Large ribosomal subunit protein uL11 (Rhodopseudomonas palustris (strain ATCC BAA-98 / CGA009)).